Here is a 456-residue protein sequence, read N- to C-terminus: tRNA (guanine(37)-N(1))-methyltransferase (456 aa).

S-adenosyl-L-methionine contacts are provided by residues H246, 284–285 (DL), 310–311 (DG), and N336.

This sequence belongs to the class I-like SAM-binding methyltransferase superfamily. TRM5/TYW2 family. As to quaternary structure, monomer.

The protein localises to the mitochondrion matrix. It is found in the nucleus. Its subcellular location is the cytoplasm. It catalyses the reaction guanosine(37) in tRNA + S-adenosyl-L-methionine = N(1)-methylguanosine(37) in tRNA + S-adenosyl-L-homocysteine + H(+). Functionally, specifically methylates the N1 position of guanosine-37 in various cytoplasmic and mitochondrial tRNAs. Methylation is not dependent on the nature of the nucleoside 5' of the target nucleoside. This is the first step in the biosynthesis of wybutosine (yW), a modified base adjacent to the anticodon of tRNAs and required for accurate decoding. In Ciona intestinalis (Transparent sea squirt), this protein is tRNA (guanine(37)-N(1))-methyltransferase.